The primary structure comprises 623 residues: MSKARSQDEVGWKRNESLCEYSMHRSRRPIQEKSIQSRAEHNFTLTRAYAINGSMTPDSSNLHHSSQVAVGRDAEGSANTLNTPFSEACFSQLISDGARSYLDFDFPDETIPGTSQAKNTEPDHQASGLQNQMSCDSLRNNTIMLDWLDLDYDGNLRQYSTAQLYGLLGADAHNGSAKCTLSLLPERMVADKAEAKLLLNHKMYGLTALCKNADRGSRRQQAVWEKVEVLLSSKHQTCVSDLLRKVDSSGEHQSLDLTSLPIEKLVQRAFRELGGLNLFIKEQDVTRIQERFLDPEKLPVDVSDMSLLITSLAWGALLDPEKLQRCYFARMVAFLCLAEKTGSDNLPALILGSISTAASLSLHLETALRKSCVSNDQAVQTKRAMWILYCIDKSYALRWQTFSLVGDGSLPTTNPPDTALPSEVATTLSLEWLRIRSQYSKICSNILQLGVGAEGEPSENRSNRAVVLSAALEEWYGSVEISQMMLSLEHSDAVHMKLQTSYHYYEARFQLLSISLPDPRSSSPTGSQECREVLRRSIREVITGSNTITSEYLLQDCNHLFIQTLALSMLALDILLESDQGCGKENRALLSIVAGFFARVDIILPQSSIFEEVSNLIEILTYR.

The segment at 110–129 is disordered; the sequence is TIPGTSQAKNTEPDHQASGL.

The protein operates within mycotoxin biosynthesis. Part of the gene clusters that mediate the biosynthesis of AM-toxins, host-selective toxins (HSTs) causing Alternaria blotch on apple, a worldwide distributed disease. AM-toxins are cyclic depsipeptides containing the 3 residues 2-hydroxy-isovaleric acid (2-HIV), dehydroalanine, L-alanine which are common for all 3 AM-toxins I to III. The fourth precursor is L-alpha-amino-methoxyphenyl-valeric acid (L-Amv) for AM-toxin I, L-alpha-amino-phenyl-valeric acid (L-Apv) for AM-toxin II, and L-alpha-amino-hydroxyphenyl-valeric acid (L-Ahv) for AM-toxin III. AM-toxins have two target sites for affecting susceptible apple cells; they cause invagination of the plasma membrane and electrolyte loss and chloroplast disorganization. The non-ribosomal peptide synthetase AMT1 contains 4 catalytic modules and is responsible for activation of each residue in AM-toxin. The aldo-keto reductase AMT2 catalyzes the conversion of 2-keto-isovaleric acid (2-KIV) to 2-hydroxy-isovaleric acid (2-HIV), one of the precursor residues incorporated by AMT1 during AM-toxin biosynthesis, by reduction of its ketone to an alcohol. The cytochrome P450 monooxygenase AMT3 and the thioesterase AMT4 are also important for AM-toxin production, but their exact function within the AM-toxin biosynthesis are not known yet. Up to 21 proteins (including AMT1 to AMT4) are predicted to be involved in AM-toxin biosynthesis since their expression ishighly up-regulated in AM-toxin-producing cultures. This is AM-toxin biosynthesis protein 12-2 from Alternaria alternata (Alternaria rot fungus).